The chain runs to 235 residues: Non-structural maintenance of chromosomes element 1 homolog (235 aa).

The RING-type; atypical zinc-finger motif lies at 181–225 (IKNCTLCKCLVLWDIRCGSCNIQYHRGCIQTYLQRRDICPSCGNL). A Phosphothreonine modification is found at threonine 185.

It belongs to the NSE1 family. Component of the Smc5-Smc6 complex which consists at least of Smc5, Smc6, Nse1, Nse2, Nse4 and MAGE. Nse1, Nse4 and MAGE probably form a subcomplex that bridges the head domains of the Smc5-Smc6 heterodimer. Interacts with MAGE and Nse4.

The protein localises to the nucleus. It carries out the reaction S-ubiquitinyl-[E2 ubiquitin-conjugating enzyme]-L-cysteine + [acceptor protein]-L-lysine = [E2 ubiquitin-conjugating enzyme]-L-cysteine + N(6)-ubiquitinyl-[acceptor protein]-L-lysine.. In terms of biological role, component of the SMC5-SMC6 complex, a complex involved in repair of DNA double-strand breaks by homologous recombination. The complex may promote sister chromatid homologous recombination by recruiting the SMC1-SMC3 cohesin complex to double-strand breaks. The chain is Non-structural maintenance of chromosomes element 1 homolog from Drosophila melanogaster (Fruit fly).